The chain runs to 1574 residues: Centrosomal protein of 170 kDa protein B (1574 aa).

The FHA domain occupies I23–I73. Disordered regions lie at residues V121 to G258, D316 to Q395, and F409 to E578. 3 stretches are compositionally biased toward basic and acidic residues: residues R147–A157, S182–D197, and L325–V344. S360 carries the post-translational modification Phosphoserine. Low complexity predominate over residues A370 to E382. S421 carries the post-translational modification Phosphoserine. A compositionally biased stretch (basic and acidic residues) spans P430–P446. Positions A452–S463 are enriched in polar residues. Residues L465–L474 show a composition bias toward basic and acidic residues. The span at G475 to F488 shows a compositional bias: polar residues. 2 positions are modified to phosphoserine: S478 and S490. Pro residues predominate over residues E518–L528. At S534 the chain carries Phosphoserine. Residues T540 and T541 each carry the phosphothreonine modification. Residues S595, S617, S653, S709, S744, S746, S749, S751, S819, and S843 each carry the phosphoserine modification. Disordered stretches follow at residues P637–L826, R839–S882, S924–G1300, A1333–A1358, N1377–T1407, and N1510–A1535. The span at F857–P867 shows a compositional bias: polar residues. S947 is subject to Phosphoserine. Over residues D950 to S959 the composition is skewed to polar residues. 2 positions are modified to phosphoserine: S965 and S981. Residues A996–H1005 are compositionally biased toward basic and acidic residues. A compositionally biased stretch (polar residues) spans R1084–L1102. A Phosphoserine modification is found at S1122. The span at A1134–E1146 shows a compositional bias: low complexity. S1166 and S1186 each carry phosphoserine. Residues A1199 to A1213 are compositionally biased toward low complexity. Over residues H1265 to R1282 the composition is skewed to polar residues. Residue T1289 is modified to Phosphothreonine. Phosphoserine is present on S1341. Composition is skewed to polar residues over residues P1344–A1358 and S1385–N1396. At T1345 the chain carries Phosphothreonine. A Phosphoserine modification is found at S1347. Phosphoserine is present on residues S1530 and S1533.

It belongs to the CEP170 family.

The protein localises to the cytoplasm. It is found in the cytoskeleton. In terms of biological role, plays a role in microtubule organization. This Mus musculus (Mouse) protein is Centrosomal protein of 170 kDa protein B (Cep170b).